Consider the following 628-residue polypeptide: Probable alpha-L-arabinofuranosidase A (628 aa).

Residues 1–25 (MVAFSTISGLGALSLLFSIIESVDG) form the signal peptide. Asn-36, Asn-51, Asn-74, Asn-152, Asn-164, Asn-260, Asn-359, Asn-404, and Asn-493 each carry an N-linked (GlcNAc...) asparagine glycan.

Belongs to the glycosyl hydrolase 51 family.

It localises to the secreted. The catalysed reaction is Hydrolysis of terminal non-reducing alpha-L-arabinofuranoside residues in alpha-L-arabinosides.. Its pathway is glycan metabolism; L-arabinan degradation. Functionally, alpha-L-arabinofuranosidase involved in the degradation of arabinoxylan, a major component of plant hemicellulose. Acts only on small linear 1,5-alpha-linked L-arabinofuranosyl oligosaccharides. The chain is Probable alpha-L-arabinofuranosidase A (abfA) from Aspergillus terreus (strain NIH 2624 / FGSC A1156).